Consider the following 398-residue polypeptide: S-adenosylmethionine synthase (398 aa).

H16 contacts ATP. Position 18 (D18) interacts with Mg(2+). E51 contributes to the K(+) binding site. The L-methionine site is built by E64 and Q108. The flexible loop stretch occupies residues 108 to 118; it reads QSADIAQGVDA. ATP-binding positions include 176-178, 242-243, D251, 257-258, A274, and K278; these read DSK, KF, and RK. Residue D251 coordinates L-methionine. K282 serves as a coordination point for L-methionine.

This sequence belongs to the AdoMet synthase family. As to quaternary structure, homotetramer; dimer of dimers. Mg(2+) is required as a cofactor. It depends on K(+) as a cofactor.

It localises to the cytoplasm. The catalysed reaction is L-methionine + ATP + H2O = S-adenosyl-L-methionine + phosphate + diphosphate. It functions in the pathway amino-acid biosynthesis; S-adenosyl-L-methionine biosynthesis; S-adenosyl-L-methionine from L-methionine: step 1/1. Its function is as follows. Catalyzes the formation of S-adenosylmethionine (AdoMet) from methionine and ATP. The overall synthetic reaction is composed of two sequential steps, AdoMet formation and the subsequent tripolyphosphate hydrolysis which occurs prior to release of AdoMet from the enzyme. The polypeptide is S-adenosylmethionine synthase (Nitrobacter hamburgensis (strain DSM 10229 / NCIMB 13809 / X14)).